Here is a 42-residue protein sequence, read N- to C-terminus: Mating-type M-specific polypeptide Mi (42 aa).

Its subcellular location is the cytoplasm. It localises to the nucleus. Its function is as follows. Mating type proteins are sequence specific DNA-binding proteins that act as master switches in yeast differentiation by controlling gene expression in a cell type-specific fashion. Required for meiosis, but plays no role in conjugation. This is Mating-type M-specific polypeptide Mi (mat1-Mi) from Schizosaccharomyces pombe (strain 972 / ATCC 24843) (Fission yeast).